A 285-amino-acid polypeptide reads, in one-letter code: Nucleotide-binding protein Psyr_4150 (285 aa).

Position 8–15 (8–15) interacts with ATP; the sequence is GRSGSGKS. 60-63 provides a ligand contact to GTP; the sequence is DARN.

Belongs to the RapZ-like family.

Displays ATPase and GTPase activities. This is Nucleotide-binding protein Psyr_4150 from Pseudomonas syringae pv. syringae (strain B728a).